The primary structure comprises 481 residues: Aspartyl/glutamyl-tRNA(Asn/Gln) amidotransferase subunit B (481 aa).

This sequence belongs to the GatB/GatE family. GatB subfamily. As to quaternary structure, heterotrimer of A, B and C subunits.

The enzyme catalyses L-glutamyl-tRNA(Gln) + L-glutamine + ATP + H2O = L-glutaminyl-tRNA(Gln) + L-glutamate + ADP + phosphate + H(+). It carries out the reaction L-aspartyl-tRNA(Asn) + L-glutamine + ATP + H2O = L-asparaginyl-tRNA(Asn) + L-glutamate + ADP + phosphate + 2 H(+). In terms of biological role, allows the formation of correctly charged Asn-tRNA(Asn) or Gln-tRNA(Gln) through the transamidation of misacylated Asp-tRNA(Asn) or Glu-tRNA(Gln) in organisms which lack either or both of asparaginyl-tRNA or glutaminyl-tRNA synthetases. The reaction takes place in the presence of glutamine and ATP through an activated phospho-Asp-tRNA(Asn) or phospho-Glu-tRNA(Gln). The protein is Aspartyl/glutamyl-tRNA(Asn/Gln) amidotransferase subunit B of Pseudomonas syringae pv. tomato (strain ATCC BAA-871 / DC3000).